The sequence spans 1151 residues: Importin beta (1151 aa).

HEAT repeat units follow at residues 1–36 (MDLA…KQEE), 37–82 (PASY…GNGN), 83–132 (PECV…VAQF), 133–175 (PEFF…TKIG), 176–222 (GKAI…DSVI), 223–269 (PNSV…AVLK), 270–316 (PMVK…RAKK), 317–377 (AISE…KVIF), 378–416 (PLIK…LVTK), 417–453 (EDIV…EDYA), 454–495 (PTFQ…HLKK), 496–540 (AETY…LKND), 541–593 (FADM…AGTL), 594–642 (PQLF…PETF), 643–704 (PKYM…MRKT), 705–756 (PAAF…TVAS), 757–811 (PPAV…SYTE), 812–880 (TVNK…ALGD), 881–932 (LSLD…KYLS), 933–978 (PANS…YEGD), 979–1027 (PGLA…AQAF), 1028–1074 (PTEL…ARND), 1075–1120 (PNFM…VLTQ), and 1121–1151 (IAGH…SVRQ).

The protein belongs to the importin beta family.

Its subcellular location is the nucleus intermembrane space. The protein resides in the cytoplasm. It localises to the nucleus. Functionally, functions in nuclear protein import as nuclear transport receptor. Involved in encystation process. Constitutive expression enhances cyst production and increases transcription of endogenous genes involved in encystation. Level of mRNA of the transcriptional factor myb1-like protein increases in early stages of the encystation process followed by increased mRNAs of the cyst wall proteins cwp1-3. This Giardia intestinalis (strain ATCC 50803 / WB clone C6) (Giardia lamblia) protein is Importin beta.